A 999-amino-acid chain; its full sequence is Desmoglein-3 (999 aa).

The signal sequence occupies residues 1–23 (MMGLFPRTTGALAIFVVVILVHG). Residues 24-49 (ELRIETKGQYDEEEMTMQQAKRRQKR) constitute a propeptide that is removed on maturation. 4 Cadherin domains span residues 50-158 (EWVK…PVFS), 159-268 (QQIF…PMFR), 269-383 (DSQY…GIAF), and 386-499 (ASKT…VLEK). At 50–615 (EWVKFAKPCR…TRYGRPHSGR (566 aa)) the chain is on the extracellular side. N-linked (GlcNAc...) asparagine glycosylation is found at Asn-110 and Asn-180. Residues Asn-459 and Asn-545 are each glycosylated (N-linked (GlcNAc...) asparagine). A helical membrane pass occupies residues 616 to 640 (LGPAAIGLLLLGLLLLLLAPLLLLT). Residues 641–999 (CDCGAGSTGG…CTEDPCSRLI (359 aa)) are Cytoplasmic-facing. The tract at residues 642–714 (DCGAGSTGGV…NTYARGTAVE (73 aa)) is required for interaction with CTNND1 and localization at cell-cell junctions. Desmoglein repeat repeat units lie at residues 910-935 (LSTS…LVTE) and 936-966 (TYSA…ERVI).

In terms of assembly, homodimer. Part of a complex that contains DSG3, PKP1, YAP1 and YWHAG; the complex is required for localization of DSG3 and YAP1 to the cell membrane in keratinocytes. Interacts with PKP2. Interacts with CTNND1; the interaction facilitates DSG3 localization and retention at cell-cell junctions. Interacts with CDH1; the interaction is required for CDH1 localization to developing adherens junctions. Interacts with RAC1; the interaction is required for DSG3 translocation to cell-cell junctions, organization of cortical F-actin bundles and actin anchoring at cell-cell junctions. Interacts with DSC3; the interaction may limit the interaction of DSC3 with p38MAPK family members and therefore repress p38MAPK signaling activation. Expressed throughout the basal and spinous layer of the epidermis with weak expression in the granular layer (at protein level). Expressed in skin and mucosa (at protein level). Expressed in the basal layer of the outer root sheath of the telogen hair club, specifically at the cell membrane between the apex of the cells and the surrounding hair club (at protein level). Expression is less abundant between the lateral margins of the outer root sheath basal cells (at protein level). Also expressed in the tongue, tonsil and esophagus.

It is found in the cell membrane. Its subcellular location is the cell junction. The protein localises to the desmosome. It localises to the cytoplasm. The protein resides in the tight junction. In terms of biological role, a component of desmosome cell-cell junctions which are required for positive regulation of cellular adhesion. Required for adherens and desmosome junction assembly in response to mechanical force in keratinocytes. Required for desmosome-mediated cell-cell adhesion of cells surrounding the telogen hair club and the basal layer of the outer root sheath epithelium, consequently is essential for the anchoring of telogen hairs in the hair follicle. Required for the maintenance of the epithelial barrier via promoting desmosome-mediated intercellular attachment of suprabasal epithelium to basal cells. May play a role in the protein stability of the desmosome plaque components DSP, JUP, PKP1, PKP2 and PKP3. Required for YAP1 localization at the plasma membrane in keratinocytes in response to mechanical strain, via the formation of an interaction complex composed of DSG3, PKP1 and YWHAG. May also be involved in the positive regulation of YAP1 target gene transcription and as a result cell proliferation. Positively regulates cellular contractility and cell junction formation via organization of cortical F-actin bundles and anchoring of actin to tight junctions, in conjunction with RAC1. The cytoplasmic pool of DSG3 is required for the localization of CDH1 and CTNNB1 at developing adherens junctions, potentially via modulation of SRC activity. Inhibits keratinocyte migration via suppression of p38MAPK signaling, may therefore play a role in moderating wound healing. This is Desmoglein-3 from Homo sapiens (Human).